A 152-amino-acid chain; its full sequence is UPF0225 protein YchJ (152 aa).

Belongs to the UPF0225 family.

The protein is UPF0225 protein YchJ of Shigella boydii serotype 18 (strain CDC 3083-94 / BS512).